Here is a 1946-residue protein sequence, read N- to C-terminus: Chromodomain-helicase-DNA-binding protein 5 (1946 aa).

Disordered stretches follow at residues 1–140 (MRGP…SGQL), 236–272 (VPQT…GRGK), and 285–340 (SKRK…GDGY). 2 stretches are compositionally biased toward acidic residues: residues 17–37 (EEME…EGFE) and 72–90 (NDEM…ESEG). Composition is skewed to basic residues over residues 96–118 (TKKK…KRKK) and 254–272 (GVRK…GRGK). Residues 293–303 (SEEDEREDSDL) show a composition bias toward acidic residues. Positions 323–332 (KKNKRRRKKK) are enriched in basic residues. PHD-type zinc fingers lie at residues 345–392 (QDYC…CEKE) and 418–465 (MEFC…CTCP). Residues 345–655 (QDYCEVCQQG…HRELMLGEDA (311 aa)) are histone-binding. Positions 499–556 (MPPPRPLEGIPEREFFVKWAGLSYWHCSWVKELQLELYHTVMYRNYQRKNDMDEPPPF) constitute a Chromo 1 domain. The interval 551–573 (DEPPPFDYGSGDEDGKSEKRKNK) is disordered. Over residues 563–573 (EDGKSEKRKNK) the composition is skewed to basic and acidic residues. The Chromo 2 domain maps to 594-655 (MMVHRILNHS…HRELMLGEDA (62 aa)). The Helicase ATP-binding domain occupies 714–898 (RFSWAQGTDT…FHLLNFLTPE (185 aa)). 727 to 734 (DEMGLGKT) contacts ATP. Residues 849 to 852 (DEAH) carry the DEAH box motif. The region spanning 1030-1195 (LLQKMLKKLR…MTKQELDDIL (166 aa)) is the Helicase C-terminal domain. Disordered stretches follow at residues 1210-1254 (MMSQ…VEDS), 1353-1413 (YNDA…LPPL), 1525-1566 (KYST…APLG), 1579-1696 (DEKE…EDKN), and 1926-1946 (SFPA…LQPF). Residues 1212–1230 (SQGQRPTTPIPDIQSTKGG) show a composition bias toward polar residues. Acidic residues-rich tracts occupy residues 1357 to 1368 (SQEDQEWQDELS) and 1378 to 1387 (SEDEDEDFEE). Gln1392 bears the N5-methylglutamine mark. The segment covering 1551–1564 (TPVPASPAQLPPAP) has biased composition (pro residues). Ser1556 bears the Phosphoserine mark. Basic and acidic residues-rich tracts occupy residues 1602–1629 (DRVE…EVEK), 1637–1654 (PLKE…DKPE), and 1661–1676 (GDFR…KEPG).

It belongs to the SNF2/RAD54 helicase family. As to quaternary structure, component of the nucleosome remodeling and deacetylase (NuRD) repressor complex, composed of core proteins MTA1, MTA2, MTA3, RBBP4, RBBP7, HDAC1, HDAC2, MBD2, MBD3, and peripherally associated proteins CDK2AP1, CDK2AP2, GATAD2A, GATAD2B, CHD3, CHD4 and CHD5. The exact stoichiometry of the NuRD complex is unknown, and some subunits such as MBD2 and MBD3, GATAD2A and GATAD2B, and CHD3, CHD4 and CHD5 define mutually exclusive NuRD complexes. Interacts with HDAC2. Methylated at Gln-1392 by N6AMT1. In terms of tissue distribution, specifically expressed by neurons in brain, retina and adrenal gland (at protein level). Also detected in testis.

The protein resides in the nucleus. The protein localises to the chromosome. It catalyses the reaction ATP + H2O = ADP + phosphate + H(+). Its function is as follows. ATP-dependent chromatin-remodeling factor that binds DNA through histones and regulates gene transcription. May specifically recognize and bind trimethylated 'Lys-27' (H3K27me3) and non-methylated 'Lys-4' of histone H3. Acts as a component of the histone deacetylase NuRD complex which participates in the remodeling of chromatin. Plays a role in the development of the nervous system by activating the expression of genes promoting neuron terminal differentiation. In parallel, it may also positively regulate the trimethylation of histone H3 at 'Lys-27' thereby specifically repressing genes that promote the differentiation into non-neuronal cell lineages. Regulates the expression of genes involved in cell proliferation and differentiation. Downstream activated genes may include CDKN2A that positively regulates the p53/TP53 pathway, which in turn, prevents cell proliferation. In spermatogenesis, it probably regulates histone hyperacetylation and the replacement of histones by transition proteins in chromatin, a crucial step in the condensation of spermatid chromatin and the production of functional spermatozoa. The protein is Chromodomain-helicase-DNA-binding protein 5 (Chd5) of Mus musculus (Mouse).